Reading from the N-terminus, the 468-residue chain is 23S rRNA (uracil(1939)-C(5))-methyltransferase RlmD (468 aa).

Residues 12 to 70 (SKQLSPKLSLNVTQLDHLGAGMAQHQGKVVFIPQALPGERVSVQLTDQKKSFAKAKLIK) enclose the TRAM domain. [4Fe-4S] cluster contacts are provided by C83, C89, C92, and C174. S-adenosyl-L-methionine-binding residues include Q296, F325, N330, E351, D378, and D398. Residue C424 is the Nucleophile of the active site.

It belongs to the class I-like SAM-binding methyltransferase superfamily. RNA M5U methyltransferase family. RlmD subfamily.

The catalysed reaction is uridine(1939) in 23S rRNA + S-adenosyl-L-methionine = 5-methyluridine(1939) in 23S rRNA + S-adenosyl-L-homocysteine + H(+). Catalyzes the formation of 5-methyl-uridine at position 1939 (m5U1939) in 23S rRNA. This is 23S rRNA (uracil(1939)-C(5))-methyltransferase RlmD from Shewanella denitrificans (strain OS217 / ATCC BAA-1090 / DSM 15013).